The sequence spans 604 residues: Kelch-like protein 20 (604 aa).

The 68-residue stretch at 63–130 folds into the BTB domain; that stretch reads CDVVLVVGAK…AYTSQITVEE (68 aa). Residues 165–267 enclose the BACK domain; it reads CLGIRAFADT…SPKFLVGTVG (103 aa). Kelch repeat units follow at residues 314–360, 362–408, 409–455, 457–502, 504–549, and 551–596; these read VLFA…VLDD, LYAV…VLGG, FLYA…VLGG, LYAV…VYQD, IYAV…VVNG, and LMAV…VIKM.

In terms of assembly, component of the BCR(KLHL20) E3 ubiquitin ligase complex, at least composed of CUL3, KLHL20 and RBX1. Interacts with PDZ-RhoGEF/ARHGEF11, DAPK1, PML and CORO7. Interacts with F-actin. Interacts with IFN-gamma (IFNG). Interacts (via kelch repeats) with IVNS1ABP (via kelch repeats); this interaction blocks the assembly of CUL3-KLHL20 complex.

It localises to the cytoplasm. The protein localises to the perinuclear region. The protein resides in the nucleus. It is found in the golgi apparatus. Its subcellular location is the trans-Golgi network. It localises to the cell projection. The protein localises to the axon. The protein resides in the dendrite. It participates in protein modification; protein ubiquitination. In terms of biological role, substrate-specific adapter of a BCR (BTB-CUL3-RBX1) E3 ubiquitin-protein ligase complex involved in interferon response and anterograde Golgi to endosome transport. The BCR(KLHL20) E3 ubiquitin ligase complex mediates the ubiquitination of DAPK1, leading to its degradation by the proteasome, thereby acting as a negative regulator of apoptosis. The BCR(KLHL20) E3 ubiquitin ligase complex also specifically mediates 'Lys-33'-linked ubiquitination. Involved in anterograde Golgi to endosome transport by mediating 'Lys-33'-linked ubiquitination of CORO7, promoting interaction between CORO7 and EPS15, thereby facilitating actin polymerization and post-Golgi trafficking. Also acts as a regulator of endothelial migration during angiogenesis by controlling the activation of Rho GTPases. The BCR(KLHL20) E3 ubiquitin ligase complex acts as a regulator of neurite outgrowth by mediating ubiquitination and degradation of PDZ-RhoGEF/ARHGEF11. This chain is Kelch-like protein 20 (Klhl20), found in Mus musculus (Mouse).